The chain runs to 181 residues: Transcription termination/antitermination protein NusG (181 aa).

The KOW domain occupies 130-158 (PGETVRVNDGPFSDFNGIVEEVDYEKNRL).

Belongs to the NusG family. In terms of assembly, monomer. Interacts with the transcription termination factor Rho and with RNA polymerase.

Its function is as follows. Participates in transcription elongation, termination and antitermination. In the absence of Rho, increases the rate of transcription elongation by the RNA polymerase (RNAP), probably by partially suppressing pausing. In the presence of Rho, modulates most Rho-dependent termination events by interacting with the RNAP to render the complex more susceptible to the termination activity of Rho. May be required to overcome a kinetic limitation of Rho to function at certain terminators. Also involved in ribosomal RNA transcriptional antitermination. The polypeptide is Transcription termination/antitermination protein NusG (Buchnera aphidicola subsp. Baizongia pistaciae (strain Bp)).